Here is a 399-residue protein sequence, read N- to C-terminus: MPDPGWAARTPEANDLLLKAGTGVGTHLANQTAWTTLGASHHASGVASAINTAATAASWLGVGSAASALNVTMLNATLHGLAGWVDVKPAVVSTAIAAFETANAAMRPAPECMVNRDEWGVDNAINPSVLWTLTPRIVSLDVEYFGVMWPNNAAVGATYGGVLAALAESLAIPPPVATMGASPAAPAQAAAAVGQAAAEAAAGCGMRSAYQGVQAGSTGAGQSTSAGENFGNQLSTFMQPMQAVMQAAPQALQAPSGLMQAPMSAMQPLQSMVGMFANPGALGMGGAAPGASAASAAGGISAAATEVGAGGGGAALGGGGMPATSFTRPVSAFESGTSGRPVGLRPSGALGADVVRAPTTTVGGTPIGGMPVGHAAGGHRGSHGKSEQAATVRVVDDRR.

Positions 375–399 (AAGGHRGSHGKSEQAATVRVVDDRR) are disordered.

The protein belongs to the mycobacterial PPE family.

This is an uncharacterized protein from Mycobacterium tuberculosis (strain CDC 1551 / Oshkosh).